We begin with the raw amino-acid sequence, 156 residues long: Transcriptional repressor NrdR (156 aa).

The segment at 3–34 (CPFCQHGHSRVIDSRVIEAGSAIRRRRECSQC) is a zinc-finger region. One can recognise an ATP-cone domain in the interval 46 to 136 (LLVLKRNGVT…VYKSFESADD (91 aa)).

This sequence belongs to the NrdR family. Zn(2+) is required as a cofactor.

In terms of biological role, negatively regulates transcription of bacterial ribonucleotide reductase nrd genes and operons by binding to NrdR-boxes. The polypeptide is Transcriptional repressor NrdR (Corynebacterium efficiens (strain DSM 44549 / YS-314 / AJ 12310 / JCM 11189 / NBRC 100395)).